We begin with the raw amino-acid sequence, 405 residues long: MENIMTLPKIKQVRAWFTGGATAEKGAGGGDYHDQGANHWIDDHIATPMSKYREYEQSRQSFGINVLGTLIVEVEAENGQTGFAVSTAGEMGCFIVEKHLNRFIEGKCVSDIKLIHDQMLNATLYYSGSGGLVMNTISCVDLALWDLFGKVVGLPVYKLLGGAVRDEIQFYATDARPDLAKEMGFIGGKMPTHWGPHDGDAGIHKDAAMVADMREKCGEDFWLMLDCWMSQDVNYATKLAHACAPYNLKWIEECLPPQQYEGYRELKRNAPAGMMVTSGEHHGTLQSFRTLSETGIDIMQPDVGWCGGLTTLVEIAAIAKSRGQLVVPHGSSVYSHHAVITFTNTPFSEFLMTSPDCSTMRPQFDPILLNEPVPVNGRIHKSVLDKPGFGVELNRDCNLKRPYSH.

The substrate site is built by H33 and R59. Mg(2+) contacts are provided by D226, E252, and E280. The active-site Proton acceptor is H329. A substrate-binding site is contributed by E349.

This sequence belongs to the mandelate racemase/muconate lactonizing enzyme family. RhamD subfamily. In terms of assembly, homooctamer; tetramer of dimers. Requires Mg(2+) as cofactor.

It carries out the reaction L-rhamnonate = 2-dehydro-3-deoxy-L-rhamnonate + H2O. Its function is as follows. Catalyzes the dehydration of L-rhamnonate to 2-keto-3-deoxy-L-rhamnonate (KDR). In Escherichia coli O127:H6 (strain E2348/69 / EPEC), this protein is L-rhamnonate dehydratase.